Here is a 259-residue protein sequence, read N- to C-terminus: UPF0246 protein PBPRA0561 (259 aa).

The protein belongs to the UPF0246 family.

The chain is UPF0246 protein PBPRA0561 from Photobacterium profundum (strain SS9).